The following is a 109-amino-acid chain: Acylphosphatase (109 aa).

The 88-residue stretch at 22–109 folds into the Acylphosphatase-like domain; it reads RLRARVEGVV…GEFSSFDVVY (88 aa). Catalysis depends on residues R37 and N55.

Belongs to the acylphosphatase family.

It catalyses the reaction an acyl phosphate + H2O = a carboxylate + phosphate + H(+). The polypeptide is Acylphosphatase (acyP) (Arthrobacter sp. (strain FB24)).